A 46-amino-acid chain; its full sequence is Viscotoxin-C1 (46 aa).

3 cysteine pairs are disulfide-bonded: Cys3-Cys40, Cys4-Cys32, and Cys16-Cys26.

In terms of assembly, monomer.

The protein localises to the secreted. Thionins are small plant proteins which are toxic to animal cells. They seem to exert their toxic effect at the level of the cell membrane. Their precise function is not known. This Viscum album (European mistletoe) protein is Viscotoxin-C1.